The following is a 280-amino-acid chain: Formamidopyrimidine-DNA glycosylase (280 aa).

Proline 2 acts as the Schiff-base intermediate with DNA in catalysis. Glutamate 3 serves as the catalytic Proton donor. Lysine 58 (proton donor; for beta-elimination activity) is an active-site residue. Residues histidine 91, arginine 110, and arginine 152 each coordinate DNA. The FPG-type zinc finger occupies 237–271 (NVYGRENLPCPQCDSAIEKVVLNQRAAYFCSNCQK). Arginine 261 (proton donor; for delta-elimination activity) is an active-site residue.

Belongs to the FPG family. As to quaternary structure, monomer. Requires Zn(2+) as cofactor.

It catalyses the reaction Hydrolysis of DNA containing ring-opened 7-methylguanine residues, releasing 2,6-diamino-4-hydroxy-5-(N-methyl)formamidopyrimidine.. The enzyme catalyses 2'-deoxyribonucleotide-(2'-deoxyribose 5'-phosphate)-2'-deoxyribonucleotide-DNA = a 3'-end 2'-deoxyribonucleotide-(2,3-dehydro-2,3-deoxyribose 5'-phosphate)-DNA + a 5'-end 5'-phospho-2'-deoxyribonucleoside-DNA + H(+). Its function is as follows. Involved in base excision repair of DNA damaged by oxidation or by mutagenic agents. Acts as a DNA glycosylase that recognizes and removes damaged bases. Has a preference for oxidized purines, such as 7,8-dihydro-8-oxoguanine (8-oxoG). Has AP (apurinic/apyrimidinic) lyase activity and introduces nicks in the DNA strand. Cleaves the DNA backbone by beta-delta elimination to generate a single-strand break at the site of the removed base with both 3'- and 5'-phosphates. In Hydrogenovibrio crunogenus (strain DSM 25203 / XCL-2) (Thiomicrospira crunogena), this protein is Formamidopyrimidine-DNA glycosylase.